A 211-amino-acid polypeptide reads, in one-letter code: ATP-dependent dethiobiotin synthetase BioD (211 aa).

10 to 15 serves as a coordination point for ATP; that stretch reads GIGKTY. A Mg(2+)-binding site is contributed by Thr14. Residue Lys35 is part of the active site. Residue Ser39 coordinates substrate. ATP-binding positions include Asp44, 105-108, and 165-166; these read EGAG and NC. 2 residues coordinate Mg(2+): Asp44 and Glu105.

Belongs to the dethiobiotin synthetase family. As to quaternary structure, homodimer. Mg(2+) serves as cofactor.

The protein resides in the cytoplasm. It carries out the reaction (7R,8S)-7,8-diammoniononanoate + CO2 + ATP = (4R,5S)-dethiobiotin + ADP + phosphate + 3 H(+). It participates in cofactor biosynthesis; biotin biosynthesis; biotin from 7,8-diaminononanoate: step 1/2. Catalyzes a mechanistically unusual reaction, the ATP-dependent insertion of CO2 between the N7 and N8 nitrogen atoms of 7,8-diaminopelargonic acid (DAPA, also called 7,8-diammoniononanoate) to form a ureido ring. The polypeptide is ATP-dependent dethiobiotin synthetase BioD (Methanococcus vannielii (strain ATCC 35089 / DSM 1224 / JCM 13029 / OCM 148 / SB)).